Consider the following 711-residue polypeptide: Hydroperoxide isomerase ALOXE3 (711 aa).

The PLAT domain maps to 2-119 (AVYRLCVTTG…TVELRPGTAR (118 aa)). A Lipoxygenase domain is found at 119–711 (RTICQDALPL…PPLIENSVSI (593 aa)). The Fe cation site is built by H408, H413, H588, N592, and I711.

It belongs to the lipoxygenase family. Requires Fe cation as cofactor.

It localises to the cytoplasm. It carries out the reaction a hydroperoxyeicosatetraenoate = a hydroxy-epoxy-eicosatetraenoate. It catalyses the reaction a hydroperoxyeicosatetraenoate = an oxoeicosatetraenoate + H2O. The catalysed reaction is (12R)-hydroperoxy-(5Z,8Z,10E,14Z)-eicosatetraenoate = (8R)-hydroxy-(11R,12R)-epoxy-(5Z,9E,14Z)-eicosatrienoate. The enzyme catalyses (12S)-hydroperoxy-(5Z,8Z,10E,14Z)-eicosatetraenoate = (8R)-hydroxy-(11S,12S)-epoxy-(5Z,9E,14Z)-eicosatrienoate. It carries out the reaction (12S)-hydroperoxy-(5Z,8Z,10E,14Z)-eicosatetraenoate = (10R)-hydroxy-(11S,12S)-epoxy-(5Z,8Z,14Z)-eicosatrienoate. It catalyses the reaction (15S)-hydroperoxy-(5Z,8Z,11Z,13E)-eicosatetraenoate = (13R)-hydroxy-(14S,15S)-epoxy-(5Z,8Z,11Z)-eicosatrienoate. The catalysed reaction is (5S)-hydroperoxy-(6E,8Z,11Z,14Z)-eicosatetraenoate = 7R-hydroxy-5S,6S-epoxy-(8Z,11Z,14Z)-eicosatrienoate. The enzyme catalyses (13S)-hydroperoxy-(9Z,11E)-octadecadienoate = 11-hydroxy-(12S,13S)-epoxy-(9Z)-octadecenoate. It carries out the reaction N-[omega-(9R)-hydroperoxy-(10E,12Z)-octadecadienoyloxy]acyl-beta-D-glucosyl-(1&lt;-&gt;1)-octadecasphing-4E-enine = a N-[omega-(9R,10R)-epoxy-(13R)-hydroxy-(11E)-octadecenoyloxy]acyl-beta-D-glucosyl-(1&lt;-&gt;1)-sphing-4E-enine. It catalyses the reaction a N-[omega-(9R)-hydroperoxy-(10E,12Z)-octadecadienoyloxy]-acylsphin-4E-enine = a N-[omega-(9R,10R)-epoxy-(13R)-hydroxy-(11E)-octadecenoyloxy]-acylsphing-4E-enine. The catalysed reaction is (12R)-hydroperoxy-(5Z,8Z,10E,14Z)-eicosatetraenoate = 12-oxo-(5Z,8Z,10E,14Z)-eicosatetraenoate + H2O. The enzyme catalyses (12S)-hydroperoxy-(5Z,8Z,10E,14Z)-eicosatetraenoate = 12-oxo-(5Z,8Z,10E,14Z)-eicosatetraenoate + H2O. It carries out the reaction (15S)-hydroperoxy-(5Z,8Z,11Z,13E)-eicosatetraenoate = 15-oxo-(5Z,8Z,11Z,13E)-eicosatetraenoate + H2O. It catalyses the reaction (13S)-hydroperoxy-(9Z,11E)-octadecadienoate = 13-oxo-(9Z,11E)-octadecadienoate + H2O. The catalysed reaction is (8S)-hydroperoxy-(5Z,9E,11Z,14Z)-eicosatetraenoate = (10R)-hydroxy-(8S,9S)-epoxy-(5Z,11Z,14Z)-eicosatrienoate. The enzyme catalyses (8R)-hydroperoxy-(5Z,9E,11Z,14Z)-eicosatetraenoate = 8-oxo-(5Z,9E,11Z,14Z)-eicosatetraenoate + H2O. It carries out the reaction (8S)-hydroperoxy-(5Z,9E,11Z,14Z)-eicosatetraenoate = 8-oxo-(5Z,9E,11Z,14Z)-eicosatetraenoate + H2O. It participates in lipid metabolism; hydroperoxy eicosatetraenoic acid biosynthesis. It functions in the pathway lipid metabolism; sphingolipid metabolism. Non-heme iron-containing lipoxygenase which is atypical in that it displays a prominent hydroperoxide isomerase activity and a reduced lipoxygenases activity. The hydroperoxide isomerase activity catalyzes the isomerization of hydroperoxides, derived from arachidonic and linoleic acid by ALOX12B, into hepoxilin-type epoxyalcohols and ketones. In presence of oxygen, oxygenates polyunsaturated fatty acids, including arachidonic acid, to produce fatty acid hydroperoxides. In the skin, acts downstream of ALOX12B on the linoleate moiety of esterified omega-hydroxyacyl-sphingosine (EOS) ceramides to produce an epoxy-ketone derivative, a crucial step in the conjugation of omega-hydroxyceramide to membrane proteins. Therefore plays a crucial role in the synthesis of corneocytes lipid envelope and the establishment of the skin barrier to water loss. In parallel, it may have a signaling function in barrier formation through the production of hepoxilins metabolites. Also plays a role in adipocyte differentiation through hepoxilin A3 and hepoxilin B3 production which in turn activate PPARG. Through the production of hepoxilins in the spinal cord, it may regulate inflammatory tactile allodynia. This Rattus norvegicus (Rat) protein is Hydroperoxide isomerase ALOXE3.